The chain runs to 433 residues: Keratin, type I cytoskeletal 47 kDa (433 aa).

The segment at M1 to N73 is head. The coil 1A stretch occupies residues G74 to Y109. The 312-residue stretch at G74–F385 folds into the IF rod domain. The tract at residues L110–T127 is linker 1. A coil 1B region spans residues I128–V219. Residues R220–I242 are linker 12. The tract at residues M243 to E381 is coil 2. The segment at D382–S433 is tail.

It belongs to the intermediate filament family. Heterotetramer of two type I and two type II keratins.

The chain is Keratin, type I cytoskeletal 47 kDa (xk70a) from Xenopus laevis (African clawed frog).